The following is a 649-amino-acid chain: Epithelial sodium channel subunit gamma (649 aa).

Residues 1-55 (MAPGEKIKAKIKKNLPVTGPQAPTIKELMRWYCLNTNTHGCRRIVVSRGRLRRLL) are Cytoplasmic-facing. Residues 56-76 (WIGFTLTAVALILWQCALLVF) traverse the membrane as a helical segment. Over 77–541 (SFYTVSVSIK…GGQLGLWMSC (465 aa)) the chain is Extracellular. 8 cysteine pairs are disulfide-bonded: Cys100/Cys283, Cys207/Cys214, Cys260/Cys267, Cys372/Cys457, Cys394/Cys453, Cys398/Cys449, Cys407/Cys434, and Cys409/Cys423. Positions 135 to 221 (RKRREAESWN…SDCATYTFSS (87 aa)) are gating release of inhibition by proteolysis (GRIP); protease-sensitive region that is responsible for the proteolytic activation of the channel. Asn209 is a glycosylation site (N-linked (GlcNAc...) asparagine). Asn497 carries an N-linked (GlcNAc...) asparagine glycan. Residues 542-562 (SVVCVIEIIEVFFIDFFSIIA) traverse the membrane as a helical segment. Residues 563–649 (RRQWQKAKEW…LTDTQMLDEL (87 aa)) are Cytoplasmic-facing. Positions 623–627 (PPPKY) match the PY motif; recruits WW domain-containing proteins and is thereby required for ubiquitination and inhibition of the channel by NEDD4 and NEDD4L motif.

Belongs to the amiloride-sensitive sodium channel (TC 1.A.6) family. SCNN1G subfamily. Component of the heterotrimeric epithelial sodium channel (ENaC) composed of an alpha/SCNN1A, a beta/SCNN1B and a gamma/SCNN1G subunit. An additional delta/SCNN1D subunit can replace the alpha/SCNN1A subunit to form an alternative channel with specific properties. Interacts with WWP1 (via WW domains). Interacts with WWP2 (via WW domains); inhibits the channel. Interacts with the full-length immature form of PCSK9 (pro-PCSK9); inhibits ENaC by promoting its proteasomal degradation. Interacts with BPIFA1; the interaction is indirect via SCNN1B and inhibits the proteolytic maturation of SCNN1A and SCNN1G and the activation of ENaC. In terms of processing, phosphorylated on serine and threonine residues. Aldosterone and insulin increase the basal level of phosphorylation. Ubiquitinated. Can be ubiquitinated at multiple sites and undergo monoubiquitination and polyubiquitination. Ubiquitination by NEDD4 or NEDD4L inhibits the ENaC channel through endocytosis, intracellular retention and degradation of its individual subunits. Post-translationally, ENaC is activated through the proteolytic maturation of its subunits. Furin cleaves the SCNN1G subunit first, followed by cleavage by prostasin (PRSS8), which results in a stepwise increase in the open probability of the channel due to the release of an inhibitory tract. BPIFA1, which is recruited by the SCNN1B subunit, prevents the proteolytic activation of ENaC. In terms of processing, N-glycosylated. N-linked glycans are processed to complex type during ENaC complex assembly and transport to the plasma membrane. Expressed in kidney (at protein level).

It is found in the apical cell membrane. It carries out the reaction Na(+)(in) = Na(+)(out). Its activity is regulated as follows. Originally identified and characterized by its inhibition by the diuretic drug amiloride. In terms of biological role, this is one of the three pore-forming subunits of the heterotrimeric epithelial sodium channel (ENaC), a critical regulator of sodium balance and fluid homeostasis. ENaC operates in epithelial tissues, where it mediates the electrodiffusion of sodium ions from extracellular fluid through the apical membrane of cells, with water following osmotically. It plays a key role in maintaining sodium homeostasis through electrogenic sodium reabsorption in the kidneys. Additionally, ENaC is essential for airway surface liquid homeostasis, which is crucial for proper mucus clearance. This chain is Epithelial sodium channel subunit gamma, found in Homo sapiens (Human).